The sequence spans 217 residues: CD99 antigen-like protein 2 (217 aa).

Residues 1–25 (MVAWRWACLICLAFSLTTLVQRGSG) form the signal peptide. The Extracellular portion of the chain corresponds to 26–141 (DTGGFRLEDA…DDSGMSAETG (116 aa)). Positions 36–136 (VEGTSSVKQR…GGDNSDDSGM (101 aa)) are disordered. Over residues 50 to 64 (TTTTRRPGATRAPAK) the composition is skewed to low complexity. The segment covering 70–82 (AEDDFNLADALDD) has biased composition (acidic residues). Over residues 83–92 (QNDRDHDRKK) the composition is skewed to basic and acidic residues. An O-linked (Xyl...) (chondroitin sulfate) serine glycan is attached at S134. The chain crosses the membrane as a helical span at residues 142–162 (TIAGVASALAMALIGAVSSYI). Residues 163-217 (SYQQKKFCFSIQQGLNADYVKGENLEAVVCEEPQVKYSALQTQSTEPPPPEPPRI) are Cytoplasmic-facing.

Belongs to the CD99 family. Post-translationally, O-glycosylated.

The protein resides in the cell membrane. It is found in the cell junction. It localises to the secreted. In terms of biological role, plays a role in a late step of leukocyte extravasation helping cells to overcome the endothelial basement membrane. Acts at the same site as, but independently of, PECAM1. Homophilic adhesion molecule, but these interactions may not be required for cell aggregation. The chain is CD99 antigen-like protein 2 (CD99L2) from Bos taurus (Bovine).